The following is a 76-amino-acid chain: Defensin-like protein 71 (76 aa).

The first 22 residues, 1–22, serve as a signal peptide directing secretion; it reads MAMTQVFVIFILLATSLCNSNA. Cystine bridges form between cysteine 36-cysteine 74, cysteine 40-cysteine 63, cysteine 49-cysteine 72, and cysteine 53-cysteine 73.

The protein belongs to the DEFL family.

The protein resides in the secreted. This chain is Defensin-like protein 71 (LCR84), found in Arabidopsis thaliana (Mouse-ear cress).